The sequence spans 316 residues: Ribosomal RNA small subunit methyltransferase H (316 aa).

S-adenosyl-L-methionine is bound by residues 35-37, aspartate 55, phenylalanine 84, aspartate 105, and glutamine 112; that span reads AGH.

This sequence belongs to the methyltransferase superfamily. RsmH family.

It localises to the cytoplasm. The enzyme catalyses cytidine(1402) in 16S rRNA + S-adenosyl-L-methionine = N(4)-methylcytidine(1402) in 16S rRNA + S-adenosyl-L-homocysteine + H(+). Functionally, specifically methylates the N4 position of cytidine in position 1402 (C1402) of 16S rRNA. This chain is Ribosomal RNA small subunit methyltransferase H, found in Streptococcus thermophilus (strain CNRZ 1066).